We begin with the raw amino-acid sequence, 638 residues long: 1-deoxy-D-xylulose-5-phosphate synthase (638 aa).

Thiamine diphosphate-binding positions include histidine 75 and 116–118 (AHS). Residue aspartate 147 participates in Mg(2+) binding. Thiamine diphosphate contacts are provided by residues 148-149 (GA), asparagine 177, tyrosine 288, and glutamate 370. Asparagine 177 contacts Mg(2+).

It belongs to the transketolase family. DXPS subfamily. In terms of assembly, homodimer. It depends on Mg(2+) as a cofactor. Thiamine diphosphate is required as a cofactor.

It catalyses the reaction D-glyceraldehyde 3-phosphate + pyruvate + H(+) = 1-deoxy-D-xylulose 5-phosphate + CO2. Its pathway is metabolic intermediate biosynthesis; 1-deoxy-D-xylulose 5-phosphate biosynthesis; 1-deoxy-D-xylulose 5-phosphate from D-glyceraldehyde 3-phosphate and pyruvate: step 1/1. Functionally, catalyzes the acyloin condensation reaction between C atoms 2 and 3 of pyruvate and glyceraldehyde 3-phosphate to yield 1-deoxy-D-xylulose-5-phosphate (DXP). The sequence is that of 1-deoxy-D-xylulose-5-phosphate synthase from Cupriavidus taiwanensis (strain DSM 17343 / BCRC 17206 / CCUG 44338 / CIP 107171 / LMG 19424 / R1) (Ralstonia taiwanensis (strain LMG 19424)).